Here is a 261-residue protein sequence, read N- to C-terminus: Intermembrane phospholipid transport system permease protein MlaE (261 aa).

Residues 1–12 are Cytoplasmic-facing; that stretch reads MIVNFISALGKQ. The helical transmembrane segment at 13–33 threads the bilayer; that stretch reads VIDFFRALGRAGFMLFGALIG. Residues 34–49 are Periplasmic-facing; sequence KPQIRKHFPLLVKQMH. The chain crosses the membrane as a helical span at residues 50 to 70; that stretch reads VLGVQSLLIILLSGLFIGMVL. At 71–147 the chain is on the cytoplasmic side; the sequence is GLQGYVVLID…DPLRRVIAPR (77 aa). A helical transmembrane segment spans residues 148–168; it reads FWAGVISMPVLSILFIAIGIW. At 169–198 the chain is on the periplasmic side; sequence GGSLVGVDWKGVDSGSFWSVMQNSVSWSYD. A helical membrane pass occupies residues 199 to 219; the sequence is ILNGFIKAVFFAVAVTWIALF. Residues 220–238 are Cytoplasmic-facing; that stretch reads NGYDCMPTSEGISQATTRT. Residues 239-259 traverse the membrane as a helical segment; it reads VVHASLVVLGLDFILTAIMFG. At 260-261 the chain is on the periplasmic side; it reads AG.

This sequence belongs to the MlaE permease family. As to quaternary structure, the complex is composed of two ATP-binding proteins (MlaF), two transmembrane proteins (MlaE), two cytoplasmic solute-binding proteins (MlaB) and six periplasmic solute-binding proteins (MlaD).

Its subcellular location is the cell inner membrane. Part of the ABC transporter complex MlaFEDB, which is involved in a phospholipid transport pathway that maintains lipid asymmetry in the outer membrane by retrograde trafficking of phospholipids from the outer membrane to the inner membrane. Probably responsible for the translocation of the substrate across the membrane. In Haemophilus influenzae (strain ATCC 51907 / DSM 11121 / KW20 / Rd), this protein is Intermembrane phospholipid transport system permease protein MlaE.